Reading from the N-terminus, the 288-residue chain is Probable ketoamine kinase PM0587 (288 aa).

An ATP-binding site is contributed by 92 to 94; it reads EAL.

It belongs to the fructosamine kinase family.

Ketoamine kinase that phosphorylates ketoamines on the third carbon of the sugar moiety to generate ketoamine 3-phosphate. In Pasteurella multocida (strain Pm70), this protein is Probable ketoamine kinase PM0587.